The chain runs to 317 residues: Beta-ketoacyl-[acyl-carrier-protein] synthase III (317 aa).

Catalysis depends on residues C112 and H244. The ACP-binding stretch occupies residues 245-249 (QANIR). N274 is an active-site residue.

It belongs to the thiolase-like superfamily. FabH family. Homodimer.

The protein localises to the cytoplasm. The enzyme catalyses malonyl-[ACP] + acetyl-CoA + H(+) = 3-oxobutanoyl-[ACP] + CO2 + CoA. It participates in lipid metabolism; fatty acid biosynthesis. Catalyzes the condensation reaction of fatty acid synthesis by the addition to an acyl acceptor of two carbons from malonyl-ACP. Catalyzes the first condensation reaction which initiates fatty acid synthesis and may therefore play a role in governing the total rate of fatty acid production. Possesses both acetoacetyl-ACP synthase and acetyl transacylase activities. Its substrate specificity determines the biosynthesis of branched-chain and/or straight-chain of fatty acids. The polypeptide is Beta-ketoacyl-[acyl-carrier-protein] synthase III (Rickettsia massiliae (strain Mtu5)).